The primary structure comprises 473 residues: Cysteine--tRNA ligase (473 aa).

A Zn(2+)-binding site is contributed by C28. The 'HIGH' region motif lies at 30–40 (MTVYDFCHIGH). Residues C212, H237, and E241 each coordinate Zn(2+). The 'KMSKS' region motif lies at 277-281 (KMSKS). K280 lines the ATP pocket.

Belongs to the class-I aminoacyl-tRNA synthetase family. As to quaternary structure, monomer. Zn(2+) is required as a cofactor.

Its subcellular location is the cytoplasm. It catalyses the reaction tRNA(Cys) + L-cysteine + ATP = L-cysteinyl-tRNA(Cys) + AMP + diphosphate. The polypeptide is Cysteine--tRNA ligase (Polynucleobacter asymbioticus (strain DSM 18221 / CIP 109841 / QLW-P1DMWA-1) (Polynucleobacter necessarius subsp. asymbioticus)).